Consider the following 141-residue polypeptide: Nucleoside diphosphate kinase (141 aa).

Lys-11, Phe-59, Arg-87, Thr-93, Arg-104, and Asn-114 together coordinate ATP. His-117 serves as the catalytic Pros-phosphohistidine intermediate.

This sequence belongs to the NDK family. As to quaternary structure, homotetramer. The cofactor is Mg(2+).

The protein resides in the cytoplasm. The enzyme catalyses a 2'-deoxyribonucleoside 5'-diphosphate + ATP = a 2'-deoxyribonucleoside 5'-triphosphate + ADP. The catalysed reaction is a ribonucleoside 5'-diphosphate + ATP = a ribonucleoside 5'-triphosphate + ADP. Functionally, major role in the synthesis of nucleoside triphosphates other than ATP. The ATP gamma phosphate is transferred to the NDP beta phosphate via a ping-pong mechanism, using a phosphorylated active-site intermediate. This Burkholderia cenocepacia (strain HI2424) protein is Nucleoside diphosphate kinase.